A 591-amino-acid polypeptide reads, in one-letter code: Alpha-(1-&gt;6)-mannopyranosyltransferase Rv1459c (591 aa).

The next 13 helical transmembrane spans lie at 40–60 (FGAT…ARPV), 80–100 (VSLT…LMLG), 117–137 (TLLL…KDVY), 201–221 (IVAA…LIVW), 235–255 (VSAL…VAGI), 259–279 (ALML…LDMA), 321–341 (EWGP…SSQV), 367–387 (LLLA…ILGW), 408–428 (WMSP…LLGL), 441–461 (AIGV…VLRG), 473–493 (LAVT…WAII), 502–522 (PGFR…GPTA), and 527–547 (FALF…ILLI). A disordered region spans residues 569–591 (ESASKTPATRRPTAAPDAYADST). Over residues 574 to 584 (TPATRRPTAAP) the composition is skewed to low complexity.

This sequence belongs to the MptA/B family.

It is found in the membrane. Catalyzes the addition of alpha-(1-&gt;6)-mannose residue. The chain is Alpha-(1-&gt;6)-mannopyranosyltransferase Rv1459c from Mycobacterium tuberculosis (strain ATCC 25618 / H37Rv).